A 104-amino-acid polypeptide reads, in one-letter code: Protein RnfH (104 aa).

The protein belongs to the UPF0125 (RnfH) family.

This is Protein RnfH from Pseudomonas savastanoi pv. phaseolicola (strain 1448A / Race 6) (Pseudomonas syringae pv. phaseolicola (strain 1448A / Race 6)).